A 1336-amino-acid chain; its full sequence is Glutamate receptor ionotropic, NMDA 2D (1336 aa).

Positions 1 to 27 (MRGAGGPRGPRGPAKMLLLLALACASP) are cleaved as a signal peptide. Topologically, residues 28 to 582 (FPEEAPGPGG…SPSAFLEPYS (555 aa)) are extracellular. The N-linked (GlcNAc...) asparagine glycan is linked to Asn-92. Cys-104 and Cys-348 are joined by a disulfide. 4 N-linked (GlcNAc...) asparagine glycosylation sites follow: Asn-352, Asn-366, Asn-384, and Asn-467. 2 disulfides stabilise this stretch: Cys-455–Cys-483 and Cys-462–Cys-484. The L-glutamate site is built by Ser-539, Thr-541, and Arg-546. A glycan (N-linked (GlcNAc...) asparagine) is linked at Asn-569. The chain crosses the membrane as a helical span at residues 583–604 (PAVWVMMFVMCLTVVAVTVFIF). The Cytoplasmic segment spans residues 605 to 629 (EYLSPVGYNRSLATGKRPGGSTFTI). The discontinuously helical intramembrane region spans 630-641 (GKSIWLLWALVF). The segment at 631–650 (KSIWLLWALVFNNSVPVENP) is pore-forming. Residues 642 to 653 (NNSVPVENPRGT) lie on the Cytoplasmic side of the membrane. A helical membrane pass occupies residues 654-674 (TSKIMVLVWAFFAVIFLASYT). The Extracellular segment spans residues 675–843 (ANLAAFMIQE…EVMSSKLDID (169 aa)). Positions 717, 718, and 759 each coordinate L-glutamate. A disulfide bond links Cys-773 and Cys-828. Residues 844–867 (NMAGVFYMLLVAMGLSLLVFAWEH) traverse the membrane as a helical segment. At 868–1336 (LVYWRLRHCL…AHFSSLESEV (469 aa)) the chain is on the cytoplasmic side. Disordered regions lie at residues 900 to 934 (EAAP…PFVP), 981 to 1123 (RAAP…SLGG), and 1225 to 1336 (RCGC…ESEV). The segment covering 902 to 932 (APPPAKPPPPPQPLPSPAYPAPRPAPGPAPF) has biased composition (pro residues). Over residues 981–991 (RAAPRGAAGRP) the composition is skewed to low complexity. Over residues 992–1006 (LSPPAAQPPQKPPPS) the composition is skewed to pro residues. Residues 1035–1044 (AAAATAVGPP) are compositionally biased toward low complexity. Positions 1074 to 1089 (PGAGGAGGTGGAGGGA) are enriched in gly residues. Over residues 1091–1104 (AAPPPCRAAPPPCP) the composition is skewed to pro residues. Basic residues predominate over residues 1225–1240 (RCGCPRSHPHRPRASH). At Arg-1316 the chain carries Omega-N-methylarginine. A Phosphoserine modification is found at Ser-1326. The PDZ-binding signature appears at 1334–1336 (SEV).

Belongs to the glutamate-gated ion channel (TC 1.A.10.1) family. NR2D/GRIN2D subfamily. In terms of assembly, heterotetramer. Forms heterotetrameric channels composed of two GluN1/zeta subunits (GRIN1), and two identical GluN2/epsilon subunits (GRIN2A, GRIN2B, GRIN2C or GRIN2D) or GluN3 subunits (GRIN3A or GRIN3B) (in vitro). In vivo, the subunit composition may depend on the expression levels of the different subunits. Interacts with PDZ domains of PATJ and DLG4.

The protein resides in the cell membrane. The protein localises to the postsynaptic cell membrane. The enzyme catalyses Ca(2+)(in) = Ca(2+)(out). It carries out the reaction Na(+)(in) = Na(+)(out). It catalyses the reaction K(+)(in) = K(+)(out). Component of N-methyl-D-aspartate (NMDA) receptors (NMDARs) that function as heterotetrameric, ligand-gated cation channels with high calcium permeability and voltage-dependent block by Mg(2+). Participates in synaptic plasticity for learning and memory formation. Channel activation requires binding of the neurotransmitter L-glutamate to the GluN2 subunit, glycine or D-serine binding to the GluN1 subunit, plus membrane depolarization to eliminate channel inhibition by Mg(2+). NMDARs mediate simultaneously the potasium efflux and the influx of calcium and sodium. Each GluN2 subunit confers differential attributes to channel properties, including activation, deactivation and desensitization kinetics, pH sensitivity, Ca2(+) permeability, and binding to allosteric modulators. This chain is Glutamate receptor ionotropic, NMDA 2D, found in Homo sapiens (Human).